The following is a 489-amino-acid chain: UDP-glycosyltransferase 85A1 (489 aa).

UDP-alpha-D-glucose is bound by residues serine 307, 364–366 (CPQ), 381–389 (HCGWNSILE), and 403–406 (FADQ).

The protein belongs to the UDP-glycosyltransferase family. Expressed in root tips, lateral root initials, root apex, shoots, leaf periphery, leaf primordia and flowers.

In terms of biological role, involved in the O-glucosylation of trans-zeatin and dihydrozeatin. Also active in vitro on cis-zeatin. Not active on N-glucosylated substrates. The polypeptide is UDP-glycosyltransferase 85A1 (UGT85A1) (Arabidopsis thaliana (Mouse-ear cress)).